Here is a 207-residue protein sequence, read N- to C-terminus: MLSLSKPLQEFYRLDKCLSKHGTRFEFVNDKEIICSPDESNTHTFVILEGVVSLVRGDKVLIGIVQAPFIFGLADGVAKKEAQYKLIAESGCIGYRLSSSQTLAIIEQNQLWREAFCWIVWKSQVLELRDKQLIGNNSYDQIRATLMTMIEWDEELRSRIGVMNYIHQRTRVSRSVVAEVLAALRKGNYIEMNKGKLISINRLPSEY.

The H-T-H motif DNA-binding region spans M163–A182.

It belongs to the IprA family.

Involved in oxidative stress resistance. The chain is Inhibitor of hydrogen peroxide resistance from Salmonella typhimurium (strain LT2 / SGSC1412 / ATCC 700720).